The following is a 1450-amino-acid chain: MSRGAPFPVPCPVLLGTFTDDSLEAQLHEYAKQGNCVKLKKILKKGVCVDAVNTQGQSALFVAALLGHVKLVDVLVDYGSDPNHRCFDGSTPVHAAAFSGNQWILSKLLTAGGDLRLHDEKGRNPQAWALTAGKDRSTQMVEFMQRCTSHMKAIIQGFSYDLLKKIDSPQRLIGSPPWFGSLIQGSPNSSPNRQLKPGIISAQNIYSFGFGKFYLTSGMQLTYPGSLPVIGEKEVVQADDEPTFSFFSGPYMVMTNLVWNRSRVTVKELNLPTRPHCSRLRLADLLIAEQEHSSNLRHPNLLQLMAVCLSRDLEKIRLVYERITVGTLFSVLHERRSQFPVLHMEVIVHLLLQVADALIYLHSRGFIHRSLSSYAVHIVSAGEARLTNLEYLTESQDSGAHRNVTRMPLPTQLYNWAAPEVVLQKAATVKSDIYSFSVIIQEILTDSIPWNGLDGSLVKETIALGNYLEADVRLPEPYYDIVKSGIHAKQKNRTMNLQDIRYILKNDLKEFIGAQKTQPTESPRGQSYEPHPDVNICLGLTSEYQKDPPDLDIKELKEMGSQPHSPTDHSFLTVKPTLAPQTLDSSLSAQKPDNANVPSPPAACLAEEVRSPTASQDSLCSFEINEIYSGCLTLGTDKEEECLGTAASPEGDRPNQGDELPSLEEELDKMERELHCFCEEDKSISEVDTDLLFEDDDWQSDSLGSLNLPEPTREAKGKTSSWSKTDEYVSKCVLNLKISQVMMQQSAEWLRKLEQEVEELEWAQKELDSQCSSLRDASLKFANAKFQPAVGPPSLAYLPPVMQLPGLKQPENGGTWLTLARSPGNEREFQEGHFSKKPEKLSACGWKPFTQVSEESRGDCSELNNQLPTLRGPGKQSTGEQLPSTQEARESLEKNTNQNSRSMASVSSEIYATKSRNNEDNGEAHLKWRLAVKEMAEKAVSGQLLLPPWNPQSSAPFESKVENESTPLPRPPIRGPESTEWQHILEYQRENDEPKGNTKFGKMDNSDCDKNKHSRWTGLQRFTGIRYPFFRNHEQPEQNEASQASCDTSVGTEKFYSTSSPIGDDFERFQDSFAQRQGYVEENFQIREIFEKNAEILTKPQFQAIQCAEDKQDETLGETPKELKEKNTSLTDIQDLSSITYDQDGYFKETSYKTPKLKHAPTSASTPLSPESISSAASHYEDCLENTTFHVKRGSTFCWNGQEAMRTLSAKFTTVRERAKSLESLLASSKSLPAKLTDSKRLCMLSETGSSNVSAAFVTSTHATKRKSLPRELAEATSQQHLDELPPPAQELLDEIEQLKQQQVSSLASHENTARDLSVTNKDKKHLEEQETNSSKDSSFLSSREIQDLEDTERAHSSLDEDLERFLQSPEENTALLDPTKGSTREKKNKDQDVVEQKRKKKESIKPERRESDSSLGTLEEDELKPCFWKRLGWSEPSRIIVLDQSDLSD.

3 ANK repeats span residues 27-54 (LHEYAKQGNCVKLKKILKKGVCVDAVNT), 55-84 (QGQSALFVAALLGHVKLVDVLVDYGSDPNH), and 88-117 (DGSTPVHAAAFSGNQWILSKLLTAGGDLRL). 2 positions are modified to phosphoserine: S175 and S186. The Protein kinase domain maps to 199 to 512 (IISAQNIYSF…ILKNDLKEFI (314 aa)). ATP contacts are provided by residues 205 to 213 (IYSFGFGKF) and K267. A Phosphoserine; by PLK1 modification is found at S431. Phosphoserine occurs at positions 561 and 662. Residues 700-720 (SDSLGSLNLPEPTREAKGKTS) form a disordered region. A GPPX3Y motif is present at residues 791–797 (GPPSLAY). Disordered regions lie at residues 852–906 (VSEE…MASV), 947–977 (PPWNPQSSAPFESKVENESTPLPRPPIRGPE), 992–1012 (DEPKGNTKFGKMDNSDCDKNK), and 1035–1062 (QPEQNEASQASCDTSVGTEKFYSTSSPI). Polar residues-rich tracts occupy residues 875 to 886 (KQSTGEQLPSTQ) and 894 to 906 (KNTNQNSRSMASV). Positions 889–897 (RESLEKNTN) match the D-box motif. A compositionally biased stretch (basic and acidic residues) spans 992-1011 (DEPKGNTKFGKMDNSDCDKN). The segment covering 1038–1061 (QNEASQASCDTSVGTEKFYSTSSP) has biased composition (polar residues). Phosphoserine is present on residues S1060 and S1221. 2 disordered regions span residues 1261–1282 (THATKRKSLPRELAEATSQQHL) and 1300–1418 (KQQQ…SLGT). 2 stretches are compositionally biased toward polar residues: residues 1300-1311 (KQQQVSSLASHE) and 1332-1344 (TNSSKDSSFLSSR). S1357 and S1358 each carry phosphoserine. Basic and acidic residues-rich tracts occupy residues 1383-1397 (STREKKNKDQDVVEQ) and 1404-1413 (SIKPERRESD). 2 positions are modified to phosphoserine: S1412 and S1449.

This sequence belongs to the protein kinase superfamily. In terms of assembly, interacts with KIF23 and RBM44. Interacts with CEP55; inhibiting interaction between CEP55 and PDCD6IP/ALIX and TSG101. Post-translationally, phosphorylated on Thr residues by CDK1 during early phases of mitosis, promoting the interaction with PLK1 and recruitment to kinetochores. Phosphorylated on Ser-431 by PLK1 during late prometaphase promotes the rapid depletion from kinetochores and its subsequent degradation by the APC/C complex. As to expression, detected in testis and spermatogonia. Not detectable in the other tissues tested.

The protein localises to the cytoplasm. The protein resides in the midbody. Its subcellular location is the chromosome. It is found in the centromere. It localises to the kinetochore. In terms of biological role, required both for the formation of intercellular bridges during meiosis and for kinetochore-microtubule attachment during mitosis. Intercellular bridges are evolutionarily conserved structures that connect differentiating germ cells and are required for spermatogenesis and male fertility. Acts by promoting the conversion of midbodies into intercellular bridges via its interaction with CEP55: interaction with CEP55 inhibits the interaction between CEP55 and PDCD6IP/ALIX and TSG101, blocking cell abscission and leading to transform midbodies into intercellular bridges. Also plays a role during mitosis: recruited to kinetochores by PLK1 during early mitosis and regulates the maturation of the outer kinetochores and microtubule attachment. Has no protein kinase activity in vitro. In Mus musculus (Mouse), this protein is Inactive serine/threonine-protein kinase TEX14 (Tex14).